A 280-amino-acid polypeptide reads, in one-letter code: Thylakoid lumenal protein TL20.3, chloroplastic (280 aa).

Residues 1–59 (MAFSSLSPLPMKSLDISRSSSSVSRSPYHFQRYLLRRLQLSSRSNLEIKDSSNTREGCC) constitute a chloroplast transit peptide. The transit peptide at 60 to 90 (SSAESNTWKRILSAAMAAAVIASSSGVPAMA) directs the protein to the thylakoid. Pentapeptide repeat domains are found at residues 124 to 163 (ENFR…NFSG) and 169 to 208 (TLMD…DFSD).

In terms of assembly, interacts with thioredoxin. Interacts in vitro with LTO1.

Its subcellular location is the plastid. The protein resides in the chloroplast thylakoid lumen. Pentapeptide repeat protein of unknown function. Subject to degradation when reduced. The chain is Thylakoid lumenal protein TL20.3, chloroplastic from Arabidopsis thaliana (Mouse-ear cress).